The chain runs to 134 residues: MAQVENVSLSQIIANPYLPPFSTTLFEIVIFTFIMITLYLIFRGSGLVRRRLVLLLIAIYVIVLQLFFTPYEYTTARLLPNGTVDYVVYTSQANIVMALDVLAGLMLILAVVYIILDYLRGFGKGDEEEGVIDL.

3 consecutive transmembrane segments (helical) span residues 21 to 41 (FSTT…LYLI), 52 to 72 (LVLL…TPYE), and 95 to 115 (IVMA…VYII).

The protein resides in the host membrane. This is an uncharacterized protein from Acidianus two-tailed virus (ATV).